The following is a 144-amino-acid chain: MTTQASTFAVAVPSVATPFRRHRNPFVVRAQAEPSDKSVEIMRKFSEQYARKSGTYFCVDKGVTSVVIKGLADHKDTLGAPLCPCRHYDDKAAEVAQGFWNCPCVPMRERKECHCMLFLTPDNDFAGNEQTITLDEIKESTANM.

The transit peptide at 1-31 (MTTQASTFAVAVPSVATPFRRHRNPFVVRAQ) directs the protein to the chloroplast. Cys83 is a binding site for [4Fe-4S] cluster. Cys85 serves as the catalytic Nucleophile. Cysteines 85 and 115 form a disulfide. Cys102, Cys104, and Cys113 together coordinate [4Fe-4S] cluster.

It belongs to the ferredoxin thioredoxin reductase beta subunit family. As to quaternary structure, heterodimer of subunit A (variable subunit) and subunit B (catalytic subunit). Heterodimeric FTR forms a complex with ferredoxin and thioredoxin. Requires [4Fe-4S] cluster as cofactor.

The protein resides in the plastid. It is found in the chloroplast. It carries out the reaction [thioredoxin]-disulfide + 2 reduced [2Fe-2S]-[ferredoxin] + 2 H(+) = [thioredoxin]-dithiol + 2 oxidized [2Fe-2S]-[ferredoxin]. Its function is as follows. Catalytic subunit of the ferredoxin-thioredoxin reductase (FTR), which catalyzes the two-electron reduction of thioredoxins by the electrons provided by reduced ferredoxin. In Glycine max (Soybean), this protein is Ferredoxin-thioredoxin reductase catalytic chain, chloroplastic (FTRC).